We begin with the raw amino-acid sequence, 480 residues long: Aspartyl/glutamyl-tRNA(Asn/Gln) amidotransferase subunit B (480 aa).

Belongs to the GatB/GatE family. GatB subfamily. In terms of assembly, heterotrimer of A, B and C subunits.

It catalyses the reaction L-glutamyl-tRNA(Gln) + L-glutamine + ATP + H2O = L-glutaminyl-tRNA(Gln) + L-glutamate + ADP + phosphate + H(+). The catalysed reaction is L-aspartyl-tRNA(Asn) + L-glutamine + ATP + H2O = L-asparaginyl-tRNA(Asn) + L-glutamate + ADP + phosphate + 2 H(+). In terms of biological role, allows the formation of correctly charged Asn-tRNA(Asn) or Gln-tRNA(Gln) through the transamidation of misacylated Asp-tRNA(Asn) or Glu-tRNA(Gln) in organisms which lack either or both of asparaginyl-tRNA or glutaminyl-tRNA synthetases. The reaction takes place in the presence of glutamine and ATP through an activated phospho-Asp-tRNA(Asn) or phospho-Glu-tRNA(Gln). In Saccharophagus degradans (strain 2-40 / ATCC 43961 / DSM 17024), this protein is Aspartyl/glutamyl-tRNA(Asn/Gln) amidotransferase subunit B.